The chain runs to 193 residues: Acyl-homoserine-lactone synthase (193 aa).

It belongs to the autoinducer synthase family.

It carries out the reaction a fatty acyl-[ACP] + S-adenosyl-L-methionine = an N-acyl-L-homoserine lactone + S-methyl-5'-thioadenosine + holo-[ACP] + H(+). Its function is as follows. Required for the synthesis of OHHL (N-(3-oxohexanoyl)-L-homoserine lactone) also known as VAI or N-(beta-ketocaproyl)homoserine lactone or 3-oxo-N-(tetrahydro-2-oxo-3-furanyl)-hexanamide, an autoinducer molecule which binds to LuxR and thus acts in bioluminescence regulation. The chain is Acyl-homoserine-lactone synthase (luxI) from Aliivibrio fischeri (Vibrio fischeri).